Here is a 236-residue protein sequence, read N- to C-terminus: 5'-methylthioadenosine/S-adenosylhomocysteine nucleosidase (236 aa).

Glutamate 12 functions as the Proton acceptor in the catalytic mechanism. Residues glycine 78, methionine 153, and 174–175 (ME) each bind substrate. The active-site Proton donor is aspartate 198.

The protein belongs to the PNP/UDP phosphorylase family. MtnN subfamily.

The catalysed reaction is S-adenosyl-L-homocysteine + H2O = S-(5-deoxy-D-ribos-5-yl)-L-homocysteine + adenine. It catalyses the reaction S-methyl-5'-thioadenosine + H2O = 5-(methylsulfanyl)-D-ribose + adenine. It carries out the reaction 5'-deoxyadenosine + H2O = 5-deoxy-D-ribose + adenine. Its pathway is amino-acid biosynthesis; L-methionine biosynthesis via salvage pathway; S-methyl-5-thio-alpha-D-ribose 1-phosphate from S-methyl-5'-thioadenosine (hydrolase route): step 1/2. Functionally, catalyzes the irreversible cleavage of the glycosidic bond in both 5'-methylthioadenosine (MTA) and S-adenosylhomocysteine (SAH/AdoHcy) to adenine and the corresponding thioribose, 5'-methylthioribose and S-ribosylhomocysteine, respectively. Also cleaves 5'-deoxyadenosine, a toxic by-product of radical S-adenosylmethionine (SAM) enzymes, into 5-deoxyribose and adenine. In Geobacillus thermodenitrificans (strain NG80-2), this protein is 5'-methylthioadenosine/S-adenosylhomocysteine nucleosidase.